The following is a 210-amino-acid chain: Protein VNG_2543C (210 aa).

The region spanning 12-206 (EDGARTVELA…ETGDEDDPVE (195 aa)) is the AMMECR1 domain.

This is Protein VNG_2543C from Halobacterium salinarum (strain ATCC 700922 / JCM 11081 / NRC-1) (Halobacterium halobium).